The sequence spans 207 residues: Holliday junction resolvase RecU (207 aa).

Positions 1–30 are disordered; sequence MPIRYPNGQPYSRSPKQGQAKKPLPADTYS. Residues Thr-87, Asp-89, Glu-102, and Gln-121 each contribute to the Mg(2+) site.

It belongs to the RecU family. It depends on Mg(2+) as a cofactor.

The protein resides in the cytoplasm. It carries out the reaction Endonucleolytic cleavage at a junction such as a reciprocal single-stranded crossover between two homologous DNA duplexes (Holliday junction).. Its function is as follows. Endonuclease that resolves Holliday junction intermediates in genetic recombination. Cleaves mobile four-strand junctions by introducing symmetrical nicks in paired strands. Promotes annealing of linear ssDNA with homologous dsDNA. Required for DNA repair, homologous recombination and chromosome segregation. The polypeptide is Holliday junction resolvase RecU (Shouchella clausii (strain KSM-K16) (Alkalihalobacillus clausii)).